We begin with the raw amino-acid sequence, 118 residues long: MRNWRWLLLVLAALLAWLQHRFWFGPGNSGEVRMLQVQIVQQHQENERLRQRNASLAAEVKNLKDGDAAIEERARSELGMIKPGEIFYRVVEDIPVPLPNDTSADHGVDLSQPRREKR.

The Cytoplasmic segment spans residues 1-6 (MRNWRW). The chain crosses the membrane as a helical span at residues 7–24 (LLLVLAALLAWLQHRFWF). Residues 25-118 (GPGNSGEVRM…DLSQPRREKR (94 aa)) are Periplasmic-facing. A coiled-coil region spans residues 30–66 (GEVRMLQVQIVQQHQENERLRQRNASLAAEVKNLKDG). The disordered stretch occupies residues 98-118 (LPNDTSADHGVDLSQPRREKR). Positions 103–118 (SADHGVDLSQPRREKR) are enriched in basic and acidic residues.

The protein belongs to the FtsB family. In terms of assembly, part of a complex composed of FtsB, FtsL and FtsQ.

The protein resides in the cell inner membrane. Its function is as follows. Essential cell division protein. May link together the upstream cell division proteins, which are predominantly cytoplasmic, with the downstream cell division proteins, which are predominantly periplasmic. The chain is Cell division protein FtsB from Xylella fastidiosa (strain M23).